We begin with the raw amino-acid sequence, 341 residues long: Holliday junction branch migration complex subunit RuvB (341 aa).

Positions 1-180 (MAKSHTLNPE…FGIQLRLDYY (180 aa)) are large ATPase domain (RuvB-L). ATP contacts are provided by Leu-19, Arg-20, Gly-61, Lys-64, Thr-65, Thr-66, Arg-170, Tyr-180, and Arg-217. Thr-65 lines the Mg(2+) pocket. The interval 181–251 (NDEEMKQIVL…LCLKAFEKMG (71 aa)) is small ATPAse domain (RuvB-S). Positions 254–341 (DLGLDGMDRQ…VHHGQDPTLF (88 aa)) are head domain (RuvB-H). DNA contacts are provided by Arg-309 and Arg-314.

Belongs to the RuvB family. As to quaternary structure, homohexamer. Forms an RuvA(8)-RuvB(12)-Holliday junction (HJ) complex. HJ DNA is sandwiched between 2 RuvA tetramers; dsDNA enters through RuvA and exits via RuvB. An RuvB hexamer assembles on each DNA strand where it exits the tetramer. Each RuvB hexamer is contacted by two RuvA subunits (via domain III) on 2 adjacent RuvB subunits; this complex drives branch migration. In the full resolvosome a probable DNA-RuvA(4)-RuvB(12)-RuvC(2) complex forms which resolves the HJ.

The protein localises to the cytoplasm. The catalysed reaction is ATP + H2O = ADP + phosphate + H(+). In terms of biological role, the RuvA-RuvB-RuvC complex processes Holliday junction (HJ) DNA during genetic recombination and DNA repair, while the RuvA-RuvB complex plays an important role in the rescue of blocked DNA replication forks via replication fork reversal (RFR). RuvA specifically binds to HJ cruciform DNA, conferring on it an open structure. The RuvB hexamer acts as an ATP-dependent pump, pulling dsDNA into and through the RuvAB complex. RuvB forms 2 homohexamers on either side of HJ DNA bound by 1 or 2 RuvA tetramers; 4 subunits per hexamer contact DNA at a time. Coordinated motions by a converter formed by DNA-disengaged RuvB subunits stimulates ATP hydrolysis and nucleotide exchange. Immobilization of the converter enables RuvB to convert the ATP-contained energy into a lever motion, pulling 2 nucleotides of DNA out of the RuvA tetramer per ATP hydrolyzed, thus driving DNA branch migration. The RuvB motors rotate together with the DNA substrate, which together with the progressing nucleotide cycle form the mechanistic basis for DNA recombination by continuous HJ branch migration. Branch migration allows RuvC to scan DNA until it finds its consensus sequence, where it cleaves and resolves cruciform DNA. The chain is Holliday junction branch migration complex subunit RuvB from Leptospira interrogans serogroup Icterohaemorrhagiae serovar copenhageni (strain Fiocruz L1-130).